The sequence spans 383 residues: ATP phosphoribosyltransferase regulatory subunit (383 aa).

The protein belongs to the class-II aminoacyl-tRNA synthetase family. HisZ subfamily. As to quaternary structure, heteromultimer composed of HisG and HisZ subunits.

Its subcellular location is the cytoplasm. It functions in the pathway amino-acid biosynthesis; L-histidine biosynthesis; L-histidine from 5-phospho-alpha-D-ribose 1-diphosphate: step 1/9. In terms of biological role, required for the first step of histidine biosynthesis. May allow the feedback regulation of ATP phosphoribosyltransferase activity by histidine. The sequence is that of ATP phosphoribosyltransferase regulatory subunit from Desulfitobacterium hafniense (strain DSM 10664 / DCB-2).